A 155-amino-acid polypeptide reads, in one-letter code: Ribosome maturation factor RimP (155 aa).

The protein belongs to the RimP family.

Its subcellular location is the cytoplasm. In terms of biological role, required for maturation of 30S ribosomal subunits. The protein is Ribosome maturation factor RimP of Staphylococcus aureus (strain JH9).